The primary structure comprises 93 residues: UPF0358 protein ABC2396 (93 aa).

It belongs to the UPF0358 family.

In Shouchella clausii (strain KSM-K16) (Alkalihalobacillus clausii), this protein is UPF0358 protein ABC2396.